The chain runs to 201 residues: Small ribosomal subunit protein uS4c (201 aa).

The tract at residues 17–44 is disordered; sequence ALPGLTNKKPRTGSDLRNQSRSGKKSQY. Positions 89–149 constitute an S4 RNA-binding domain; it reads MRLDNILFRL…DEQKSRALIQ (61 aa).

It belongs to the universal ribosomal protein uS4 family. As to quaternary structure, part of the 30S ribosomal subunit. Contacts protein S5. The interaction surface between S4 and S5 is involved in control of translational fidelity.

It localises to the plastid. The protein localises to the chloroplast. Its function is as follows. One of the primary rRNA binding proteins, it binds directly to 16S rRNA where it nucleates assembly of the body of the 30S subunit. In terms of biological role, with S5 and S12 plays an important role in translational accuracy. This chain is Small ribosomal subunit protein uS4c (rps4), found in Solanum bulbocastanum (Wild potato).